The sequence spans 146 residues: Probable calcium-binding protein CML40 (146 aa).

One can recognise an EF-hand 1 domain in the interval 7–42 (NKRDEYQRVFSCFDKSHQGKVSVSTIERCVDAIKSG). The segment at 44-65 (RAVVDQEDTTNPNPEESTDDKS) is disordered. The region spanning 116–146 (KSLKDCEVMISQFDINRDGIINFDEFRAMMQ) is the EF-hand 2 domain. 4 residues coordinate Ca(2+): Asp129, Asn131, Asp133, and Glu140.

Potential calcium sensor. The chain is Probable calcium-binding protein CML40 (CML40) from Arabidopsis thaliana (Mouse-ear cress).